We begin with the raw amino-acid sequence, 274 residues long: Undecaprenyl-diphosphatase (274 aa).

The next 8 helical transmembrane spans lie at 1-21, 42-62, 81-101, 107-127, 142-162, 184-204, 213-233, and 248-268; these read MDWL…FLPI, VKDT…LVYY, LWLG…LFGD, LFRP…MWLL, ISAG…LWPG, TKFS…LDFI, IGVV…YFAI, and FAVY…RGVL.

Belongs to the UppP family.

It is found in the cell membrane. The catalysed reaction is di-trans,octa-cis-undecaprenyl diphosphate + H2O = di-trans,octa-cis-undecaprenyl phosphate + phosphate + H(+). Functionally, catalyzes the dephosphorylation of undecaprenyl diphosphate (UPP). Confers resistance to bacitracin. The sequence is that of Undecaprenyl-diphosphatase from Deinococcus radiodurans (strain ATCC 13939 / DSM 20539 / JCM 16871 / CCUG 27074 / LMG 4051 / NBRC 15346 / NCIMB 9279 / VKM B-1422 / R1).